The following is a 432-amino-acid chain: Glutamate-1-semialdehyde 2,1-aminomutase (432 aa).

Lys269 is subject to N6-(pyridoxal phosphate)lysine.

This sequence belongs to the class-III pyridoxal-phosphate-dependent aminotransferase family. HemL subfamily. In terms of assembly, homodimer. Pyridoxal 5'-phosphate is required as a cofactor.

Its subcellular location is the cytoplasm. It carries out the reaction (S)-4-amino-5-oxopentanoate = 5-aminolevulinate. It functions in the pathway porphyrin-containing compound metabolism; protoporphyrin-IX biosynthesis; 5-aminolevulinate from L-glutamyl-tRNA(Glu): step 2/2. The sequence is that of Glutamate-1-semialdehyde 2,1-aminomutase from Desulforudis audaxviator (strain MP104C).